Reading from the N-terminus, the 170-residue chain is Adenine phosphoribosyltransferase (170 aa).

It belongs to the purine/pyrimidine phosphoribosyltransferase family. Homodimer.

The protein resides in the cytoplasm. The catalysed reaction is AMP + diphosphate = 5-phospho-alpha-D-ribose 1-diphosphate + adenine. It participates in purine metabolism; AMP biosynthesis via salvage pathway; AMP from adenine: step 1/1. Functionally, catalyzes a salvage reaction resulting in the formation of AMP, that is energically less costly than de novo synthesis. In Lysinibacillus sphaericus (strain C3-41), this protein is Adenine phosphoribosyltransferase.